A 204-amino-acid polypeptide reads, in one-letter code: Holliday junction branch migration complex subunit RuvA (204 aa).

The interval 1 to 64 is domain I; the sequence is MIGRLRGILL…EDAQLLYGFN (64 aa). A domain II region spans residues 65 to 143; sequence TVKERALFRE…GWGAGDLFTP (79 aa). Residues 144 to 155 form a flexible linker region; the sequence is FTDAAPTDSAAA. The interval 156 to 204 is domain III; that stretch reads SSNSAEEEAVSALLALGYKPTQASKVVSQIAKPDMSSEQLIREALKSMV.

It belongs to the RuvA family. Homotetramer. Forms an RuvA(8)-RuvB(12)-Holliday junction (HJ) complex. HJ DNA is sandwiched between 2 RuvA tetramers; dsDNA enters through RuvA and exits via RuvB. An RuvB hexamer assembles on each DNA strand where it exits the tetramer. Each RuvB hexamer is contacted by two RuvA subunits (via domain III) on 2 adjacent RuvB subunits; this complex drives branch migration. In the full resolvosome a probable DNA-RuvA(4)-RuvB(12)-RuvC(2) complex forms which resolves the HJ.

It localises to the cytoplasm. Its function is as follows. The RuvA-RuvB-RuvC complex processes Holliday junction (HJ) DNA during genetic recombination and DNA repair, while the RuvA-RuvB complex plays an important role in the rescue of blocked DNA replication forks via replication fork reversal (RFR). RuvA specifically binds to HJ cruciform DNA, conferring on it an open structure. The RuvB hexamer acts as an ATP-dependent pump, pulling dsDNA into and through the RuvAB complex. HJ branch migration allows RuvC to scan DNA until it finds its consensus sequence, where it cleaves and resolves the cruciform DNA. The polypeptide is Holliday junction branch migration complex subunit RuvA (Vibrio parahaemolyticus serotype O3:K6 (strain RIMD 2210633)).